A 92-amino-acid chain; its full sequence is Phosphoribosyl-ATP pyrophosphatase (92 aa).

This sequence belongs to the PRA-PH family.

The protein localises to the cytoplasm. The catalysed reaction is 1-(5-phospho-beta-D-ribosyl)-ATP + H2O = 1-(5-phospho-beta-D-ribosyl)-5'-AMP + diphosphate + H(+). It functions in the pathway amino-acid biosynthesis; L-histidine biosynthesis; L-histidine from 5-phospho-alpha-D-ribose 1-diphosphate: step 2/9. The sequence is that of Phosphoribosyl-ATP pyrophosphatase from Leptospira borgpetersenii serovar Hardjo-bovis (strain JB197).